Reading from the N-terminus, the 317-residue chain is Phospho-N-acetylmuramoyl-pentapeptide-transferase (317 aa).

9 consecutive transmembrane segments (helical) span residues 3–23, 48–68, 72–92, 112–132, 141–161, 171–191, 193–213, 238–258, and 297–317; these read VIIYSVLISFLFSILQGPLFI, GTPTMGGIIFITTAIIAMIIM, LNSNAVFAFVCFFSFAMIGLI, FLLQIIVSAAISYYAYIRFGS, ITWTLPPIVYMAAVVFYFVAV, LDGLASSVTILVVTFFTVVSF, WHQYELSVFCGIIVGILLGFL, AIALVLKLPLLVIIVGGIYVI, and VVSVFSIVTVILCLIAFLSLI.

Belongs to the glycosyltransferase 4 family. MraY subfamily. Mg(2+) serves as cofactor.

It is found in the cell membrane. The enzyme catalyses UDP-N-acetyl-alpha-D-muramoyl-L-alanyl-gamma-D-glutamyl-meso-2,6-diaminopimeloyl-D-alanyl-D-alanine + di-trans,octa-cis-undecaprenyl phosphate = di-trans,octa-cis-undecaprenyl diphospho-N-acetyl-alpha-D-muramoyl-L-alanyl-D-glutamyl-meso-2,6-diaminopimeloyl-D-alanyl-D-alanine + UMP. Its pathway is cell wall biogenesis; peptidoglycan biosynthesis. Functionally, catalyzes the initial step of the lipid cycle reactions in the biosynthesis of the cell wall peptidoglycan: transfers peptidoglycan precursor phospho-MurNAc-pentapeptide from UDP-MurNAc-pentapeptide onto the lipid carrier undecaprenyl phosphate, yielding undecaprenyl-pyrophosphoryl-MurNAc-pentapeptide, known as lipid I. The sequence is that of Phospho-N-acetylmuramoyl-pentapeptide-transferase from Clostridium acetobutylicum (strain ATCC 824 / DSM 792 / JCM 1419 / IAM 19013 / LMG 5710 / NBRC 13948 / NRRL B-527 / VKM B-1787 / 2291 / W).